The sequence spans 117 residues: Anti-sigma F factor antagonist (117 aa).

Positions 3-113 (LGIDMNVKES…QSEQQALLTL (111 aa)) constitute an STAS domain. Serine 58 bears the Phosphoserine mark.

Belongs to the anti-sigma-factor antagonist family. Phosphorylated by SpoIIAB on a serine residue.

In terms of biological role, in the phosphorylated form it could act as an anti-anti-sigma factor that counteracts SpoIIAB and thus releases sigma f from inhibition. The sequence is that of Anti-sigma F factor antagonist (spoIIAA) from Bacillus subtilis (strain 168).